Here is a 506-residue protein sequence, read N- to C-terminus: Probable Xaa-Pro aminopeptidase PAAG_05466 (506 aa).

The Mn(2+) site is built by Asp285, Asp296, Glu433, and Glu471.

Belongs to the peptidase M24B family. It depends on Mn(2+) as a cofactor.

The enzyme catalyses Release of any N-terminal amino acid, including proline, that is linked to proline, even from a dipeptide or tripeptide.. Its function is as follows. Catalyzes the removal of a penultimate prolyl residue from the N-termini of peptides. In Paracoccidioides lutzii (strain ATCC MYA-826 / Pb01) (Paracoccidioides brasiliensis), this protein is Probable Xaa-Pro aminopeptidase PAAG_05466.